Reading from the N-terminus, the 21-residue chain is LDEFRVYSDDANKYKISIPQD.

It localises to the plastid. The protein resides in the chloroplast thylakoid lumen. The protein is Thylakoid lumenal 13.8 kDa protein of Spinacia oleracea (Spinach).